Consider the following 368-residue polypeptide: MSKRKIKEEMLQVIAPEIYGPPKKEEQDYKPRKLKRVKKKKKDDDDELDDEVELLHATAPRRRVQWKGRRVKRVLRPGTTVVFTPGERSTRTYKRVYDEVYGDEDLLEQANERLGEFAYGKRHKDMLALPLDEGNPTPSLKPVTLQQVLPALAPSEEKRGLKRESGDLAPTVQLMVPKRQRLEDVLEKMTVEPGLEPEVRVRPIKQVAPGLGVQTVDVQIPTTSSTSIATATEGMETQTSPVASAVADAAVQAVAAAASKTSTEVQTDPWMFRVSAPRRPRGSRKYGAASALLPEYALHPSIAPTPGYRGYTYRPRRRATTRRRTTTGTRRRRRRRQPVLAPISVRRVAREGGRTLVLPTARYHPSIV.

Disordered regions lie at residues 17–49 (EIYG…DELD) and 307–340 (GYRG…QPVL). The segment covering 22-31 (PKKEEQDYKP) has biased composition (basic and acidic residues). 2 stretches are compositionally biased toward basic residues: residues 32 to 41 (RKLKRVKKKK) and 314 to 337 (RPRR…RRRQ).

Belongs to the adenoviridae core-capsid bridging protein family. Monomer. Homodimer. Exists in equilibrium between monomers and dimers in solution. Interacts with the histone-like nucleoprotein; this interactions bridge the virus core to the capsid. Interacts with core protein X; this interactions bridge the virus core to the capsid. Interacts with the endosome lysis protein VI; this interactions bridge the virus core to the capsid. Interacts with the peripentonal hexons. Interacts with host NPM1; this interaction might play a role in virus assembly. Post-translationally, during virion entry, is ubiquitinated at the nuclear pore complex by host MIB1. This dissociates viral genomic DNA from capsid and allows genome delivery into nucleus for infection.

It localises to the virion. The protein localises to the host nucleus. The protein resides in the host nucleolus. Functionally, associates loosely with the viral DNA to form an outer shell around the nucleoprotein-DNA complex and links it with the capsid by binding the endosome lysis protein. During entry, secures the viral genome in the capsid until it reaches the nuclear pore complex, preventing innate immunity responses. Dissociates from the viral genome at nuclear pore. Might be involved in nuclear capsid assembly of the viral particles through its association with NPM1/nucleophosmin. This chain is Core-capsid bridging protein, found in Human adenovirus C serotype 5 (HAdV-5).